The sequence spans 411 residues: Arginine deiminase (411 aa).

C401 functions as the Amidino-cysteine intermediate in the catalytic mechanism.

This sequence belongs to the arginine deiminase family.

The protein localises to the cytoplasm. It carries out the reaction L-arginine + H2O = L-citrulline + NH4(+). It functions in the pathway amino-acid degradation; L-arginine degradation via ADI pathway; carbamoyl phosphate from L-arginine: step 1/2. The chain is Arginine deiminase from Staphylococcus aureus (strain MRSA252).